A 341-amino-acid polypeptide reads, in one-letter code: S-adenosylmethionine:tRNA ribosyltransferase-isomerase (341 aa).

Belongs to the QueA family. In terms of assembly, monomer.

The protein resides in the cytoplasm. It catalyses the reaction 7-aminomethyl-7-carbaguanosine(34) in tRNA + S-adenosyl-L-methionine = epoxyqueuosine(34) in tRNA + adenine + L-methionine + 2 H(+). The protein operates within tRNA modification; tRNA-queuosine biosynthesis. Transfers and isomerizes the ribose moiety from AdoMet to the 7-aminomethyl group of 7-deazaguanine (preQ1-tRNA) to give epoxyqueuosine (oQ-tRNA). This chain is S-adenosylmethionine:tRNA ribosyltransferase-isomerase, found in Chlorobium phaeobacteroides (strain DSM 266 / SMG 266 / 2430).